We begin with the raw amino-acid sequence, 62 residues long: Amolopin-P1 (62 aa).

Residues Met1–Cys22 form the signal peptide. Positions Asp23 to Arg44 are excised as a propeptide.

As to expression, expressed by the skin glands.

Its subcellular location is the secreted. Antimicrobial peptide with activity against Gram-positive bacteria. Has been tested against S.aureus (MIC=37.5 ug/mL), against B.pumilus (MIC=75.0 ug/mL), B.cereus (no activity detected). Does not show activity against Gram-negative bacteria (E.coli, B.dysenteriae, A.calcoaceticus, P.aeruginosa) and fungi (C.albicans). Does not show hemolytic activity against rabbit erythrocytes. The chain is Amolopin-P1 from Amolops loloensis (Lolokou Sucker Frog).